Reading from the N-terminus, the 260-residue chain is Late transcription factor 1 (260 aa).

It belongs to the chordopoxvirinae VLTF-1 family. As to quaternary structure, interacts with the late transcription factors VLTF-2 and VLTF-3. Interacts with the late transcription elongation factor H5/VLTF-4. Interacts with itself.

Associates with RNA polymerase to initiate transcription from late gene promoters. The protein is Late transcription factor 1 (VLTF1) of Vertebrata (FPV).